Here is a 565-residue protein sequence, read N- to C-terminus: UvrABC system protein C (565 aa).

Residues 12-89 enclose the GIY-YIG domain; sequence EEPGVYIFKN…IRTHKPKYNV (78 aa). In terms of domain architecture, UVR spans 195-230; the sequence is KDVLPTLYEKIEQYASNLAFEKAAFLRDQVLVLQNI.

It belongs to the UvrC family. As to quaternary structure, interacts with UvrB in an incision complex.

The protein localises to the cytoplasm. Its function is as follows. The UvrABC repair system catalyzes the recognition and processing of DNA lesions. UvrC both incises the 5' and 3' sides of the lesion. The N-terminal half is responsible for the 3' incision and the C-terminal half is responsible for the 5' incision. The polypeptide is UvrABC system protein C (Hydrogenobaculum sp. (strain Y04AAS1)).